The chain runs to 252 residues: Electron transfer flavoprotein subunit beta (252 aa).

This sequence belongs to the ETF beta-subunit/FixA family. In terms of assembly, heterodimer of an alpha and a beta subunit. It depends on AMP as a cofactor.

Its subcellular location is the cytoplasm. Its pathway is lipid metabolism; butanoate metabolism. Functionally, part of an electron transfer flavoprotein involved in syntrophic growth of S.wolfei with butyrate. Probably receives electrons from butyryl-CoA dehydrogenases, and transfers them to the membrane-bound quinone oxidoreductase Swol_0698. The chain is Electron transfer flavoprotein subunit beta from Syntrophomonas wolfei subsp. wolfei (strain DSM 2245B / Goettingen).